The primary structure comprises 46 residues: Protein PsbN (46 aa).

Residues 5–27 (TLVTLFVSGLLMSFTGYALYTAF) form a helical membrane-spanning segment.

The protein belongs to the PsbN family.

It localises to the plastid membrane. In terms of biological role, may play a role in photosystem I and II biogenesis. The chain is Protein PsbN from Cuscuta obtusiflora (Peruvian dodder).